A 308-amino-acid polypeptide reads, in one-letter code: Ribosomal protein L11 methyltransferase (308 aa).

Residues Thr-148, Gly-169, Asp-191, and Asn-239 each contribute to the S-adenosyl-L-methionine site.

The protein belongs to the methyltransferase superfamily. PrmA family.

Its subcellular location is the cytoplasm. The catalysed reaction is L-lysyl-[protein] + 3 S-adenosyl-L-methionine = N(6),N(6),N(6)-trimethyl-L-lysyl-[protein] + 3 S-adenosyl-L-homocysteine + 3 H(+). In terms of biological role, methylates ribosomal protein L11. This Psychrobacter arcticus (strain DSM 17307 / VKM B-2377 / 273-4) protein is Ribosomal protein L11 methyltransferase.